Reading from the N-terminus, the 208-residue chain is Small ribosomal subunit protein uS9c (208 aa).

Residues 1-52 (MASITNLASSLSSLSFSSQVSQRPNTISFPRANSVFALPAKSARRASLSITA) constitute a chloroplast transit peptide.

The protein belongs to the universal ribosomal protein uS9 family.

The protein localises to the plastid. It localises to the chloroplast. In terms of biological role, binds directly to 16S ribosomal RNA. The protein is Small ribosomal subunit protein uS9c (RPS9) of Arabidopsis thaliana (Mouse-ear cress).